The sequence spans 312 residues: DDRGK domain-containing protein 1 (312 aa).

At 1 to 2 (ME) the chain is on the lumenal side. A helical membrane pass occupies residues 3–23 (LIILVGIAIALLVVIITLYLL). Residues 24–312 (QKKNAAPETK…ISAGGEEASS (289 aa)) are Cytoplasmic-facing. The tract at residues 30 to 163 (PETKPAAAPQ…KQQEDLEAEV (134 aa)) is disordered. The span at 52-85 (RRAQIARNQRNRLRQNAPAAPAGQVAPAAGAPAA) shows a compositional bias: low complexity. Residues 90-99 (DHEDEGQVDA) show a composition bias toward acidic residues. The span at 110–163 (LDEKMGAKKRAKMEAKEQKRLQREQELHDREQRKVKEAKEEAERKQQEDLEAEV) shows a compositional bias: basic and acidic residues.

This sequence belongs to the DDRGK1 family. As to quaternary structure, interacts with Atg9; the interaction is transient.

The protein resides in the endoplasmic reticulum membrane. Substrate adapter for ufmylation, the covalent attachment of the ubiquitin-like modifier UFM1 to substrate proteins. Required for ufmylation of Atg9; protects the nervous system during aging, possibly by stabilizing Atg9 and supporting its function. The polypeptide is DDRGK domain-containing protein 1 (Drosophila erecta (Fruit fly)).